The primary structure comprises 478 residues: ATP synthase subunit beta (478 aa).

164 to 171 (GGAGVGKT) contributes to the ATP binding site.

The protein belongs to the ATPase alpha/beta chains family. As to quaternary structure, F-type ATPases have 2 components, CF(1) - the catalytic core - and CF(0) - the membrane proton channel. CF(1) has five subunits: alpha(3), beta(3), gamma(1), delta(1), epsilon(1). CF(0) has three main subunits: a(1), b(2) and c(9-12). The alpha and beta chains form an alternating ring which encloses part of the gamma chain. CF(1) is attached to CF(0) by a central stalk formed by the gamma and epsilon chains, while a peripheral stalk is formed by the delta and b chains.

Its subcellular location is the cell membrane. It catalyses the reaction ATP + H2O + 4 H(+)(in) = ADP + phosphate + 5 H(+)(out). Produces ATP from ADP in the presence of a proton gradient across the membrane. The catalytic sites are hosted primarily by the beta subunits. This is ATP synthase subunit beta from Streptomyces coelicolor (strain ATCC BAA-471 / A3(2) / M145).